The following is a 349-amino-acid chain: tRNA N6-adenosine threonylcarbamoyltransferase (349 aa).

The Fe cation site is built by His113 and His117. Substrate-binding positions include 135 to 139, Asp169, Gly182, Asp186, and Asn281; that span reads LVSGG. Fe cation is bound at residue Asp309.

The protein belongs to the KAE1 / TsaD family. It depends on Fe(2+) as a cofactor.

The protein localises to the cytoplasm. It carries out the reaction L-threonylcarbamoyladenylate + adenosine(37) in tRNA = N(6)-L-threonylcarbamoyladenosine(37) in tRNA + AMP + H(+). Functionally, required for the formation of a threonylcarbamoyl group on adenosine at position 37 (t(6)A37) in tRNAs that read codons beginning with adenine. Is involved in the transfer of the threonylcarbamoyl moiety of threonylcarbamoyl-AMP (TC-AMP) to the N6 group of A37, together with TsaE and TsaB. TsaD likely plays a direct catalytic role in this reaction. The sequence is that of tRNA N6-adenosine threonylcarbamoyltransferase from Corynebacterium aurimucosum (strain ATCC 700975 / DSM 44827 / CIP 107346 / CN-1) (Corynebacterium nigricans).